We begin with the raw amino-acid sequence, 622 residues long: Intermediate filament protein ifc-2 (622 aa).

The segment at 19-54 (SGTYASGFGQLVSGMSSAGAICTTQIRDAREREKRE) is head. Residues 51-399 (EKREIGLLND…ILLNGANVTT (349 aa)) form the IF rod domain. The segment at 55–86 (IGLLNDRLADYIEKVRFLEAQNRCLSHDIDIL) is coil 1A. Residues 87–99 (RNGFSGGGHVSGL) are linker 1. Residues 100–237 (FDAEINQAKH…TENNVRIEQE (138 aa)) are coil 1B. Residues 238–255 (LVFIRRDTTADNRDYFRH) are linker 12. The coil 2 stretch occupies residues 256 to 399 (ELQAAIRDIR…ILLNGANVTT (144 aa)). Residues 400–550 (YTSNTHGSGS…RVDVGGFRIE (151 aa)) are tail. One can recognise an LTD domain in the interval 509 to 622 (SGRHFHSWYL…EERAWFVYLD (114 aa)).

This sequence belongs to the intermediate filament family. Expressed in intestinal cells and at desmosomes in intestine and pharynx of the larva.

It localises to the cytoplasm. Its function is as follows. Cytoplasmic intermediate filaments provide mechanical strength to cells. Not essential protein, although its absence leads to mild defects in locomotion. The sequence is that of Intermediate filament protein ifc-2 (ifc-2) from Caenorhabditis elegans.